The primary structure comprises 669 residues: DNA ligase (669 aa).

NAD(+) is bound by residues 34–38, 83–84, and E114; these read DAEYD and SL. Residue K116 is the N6-AMP-lysine intermediate of the active site. NAD(+) is bound by residues R137, E171, K287, and K311. C405, C408, C423, and C428 together coordinate Zn(2+). The region spanning 591-669 is the BRCT domain; it reads NVESYFAGKT…EERFLQELNK (79 aa).

It belongs to the NAD-dependent DNA ligase family. LigA subfamily. The cofactor is Mg(2+). Requires Mn(2+) as cofactor.

It catalyses the reaction NAD(+) + (deoxyribonucleotide)n-3'-hydroxyl + 5'-phospho-(deoxyribonucleotide)m = (deoxyribonucleotide)n+m + AMP + beta-nicotinamide D-nucleotide.. In terms of biological role, DNA ligase that catalyzes the formation of phosphodiester linkages between 5'-phosphoryl and 3'-hydroxyl groups in double-stranded DNA using NAD as a coenzyme and as the energy source for the reaction. It is essential for DNA replication and repair of damaged DNA. The protein is DNA ligase of Bacillus cereus (strain ATCC 10987 / NRS 248).